A 290-amino-acid polypeptide reads, in one-letter code: Cilia- and flagella-associated protein 298-A (290 aa).

The protein belongs to the CFAP298 family.

The protein localises to the cytoplasm. Its subcellular location is the cytoskeleton. It is found in the cilium basal body. Plays a role in motile cilium function, possibly by acting on outer dynein arm assembly. Seems to be important for initiation rather than maintenance of cilium motility. Required for correct positioning of the cilium at the apical cell surface, suggesting an additional role in the planar cell polarity (PCP) pathway. May suppress canonical Wnt signaling activity. This Xenopus laevis (African clawed frog) protein is Cilia- and flagella-associated protein 298-A (cfap298-a).